The primary structure comprises 184 residues: Photosystem I assembly protein Ycf4 (184 aa).

2 consecutive transmembrane segments (helical) span residues 19–39 (LSNF…LLVG) and 57–77 (FIFF…LFIS).

It belongs to the Ycf4 family.

It is found in the plastid. Its subcellular location is the chloroplast thylakoid membrane. Functionally, seems to be required for the assembly of the photosystem I complex. This chain is Photosystem I assembly protein Ycf4, found in Jasminum nudiflorum (Winter jasmine).